The primary structure comprises 153 residues: MKAVIQRVSRASVMVGGDTVGEIGPGLAVLLGVAEGDTQADAEYLVSKIINLRIFADGEGKFNLSLKDLCRELLVVSQFTLIADTRKGRRPSFVEAAQPEEADRLYNLFIRLCRGEGVQAATGKFGAMMMLEIHNDGPVTIILDSRDRLNPRQ.

A Gly-cisPro motif, important for rejection of L-amino acids motif is present at residues 137-138 (GP).

It belongs to the DTD family. In terms of assembly, homodimer.

Its subcellular location is the cytoplasm. The catalysed reaction is glycyl-tRNA(Ala) + H2O = tRNA(Ala) + glycine + H(+). The enzyme catalyses a D-aminoacyl-tRNA + H2O = a tRNA + a D-alpha-amino acid + H(+). Functionally, an aminoacyl-tRNA editing enzyme that deacylates mischarged D-aminoacyl-tRNAs. Also deacylates mischarged glycyl-tRNA(Ala), protecting cells against glycine mischarging by AlaRS. Acts via tRNA-based rather than protein-based catalysis; rejects L-amino acids rather than detecting D-amino acids in the active site. By recycling D-aminoacyl-tRNA to D-amino acids and free tRNA molecules, this enzyme counteracts the toxicity associated with the formation of D-aminoacyl-tRNA entities in vivo and helps enforce protein L-homochirality. This Dehalococcoides mccartyi (strain ATCC BAA-2266 / KCTC 15142 / 195) (Dehalococcoides ethenogenes (strain 195)) protein is D-aminoacyl-tRNA deacylase.